Consider the following 324-residue polypeptide: Reaction center protein M chain (324 aa).

The Cytoplasmic segment spans residues 2 to 51; the sequence is ADYQTIYTQIQARGPHITVSGEWGDNDRVGKPFYSYWLGKIGDAQIGPIY. The chain crosses the membrane as a helical span at residues 52–76; sequence LGASGIAAFAFGSTAILIILFNMAA. The Periplasmic portion of the chain corresponds to 77 to 110; sequence EVHFDPLQFFRQFFWLGLYPPKAQYGMGIPPLHD. Residues 111 to 137 form a helical membrane-spanning segment; it reads GGWWLMAGLFMTLSLGSWWIRVYSRAR. The Cytoplasmic portion of the chain corresponds to 138 to 142; it reads ALGLG. The helical transmembrane segment at 143-166 threads the bilayer; the sequence is THIAWNFAAAIFFVLCIGCIHPTL. Residues 167-197 lie on the Periplasmic side of the membrane; sequence VGSWSEGVPFGIWPHIDWLTAFSIRYGNFYY. (7R,8Z)-bacteriochlorophyll b contacts are provided by His181 and His201. Residues 198–223 traverse the membrane as a helical segment; it reads CPWHGFSIGFAYGCGLLFAAHGATIL. Fe cation is bound by residues His218 and Glu233. Topologically, residues 224 to 259 are cytoplasmic; it reads AVARFGGDREIEQITDRGTAVERAALFWRWTIGFNA. Position 251 (Trp251) interacts with a ubiquinone. A helical transmembrane segment spans residues 260–284; it reads TIESVHRWGWFFSLMVMVSASVGIL. His265 serves as a coordination point for Fe cation. At 285-324 the chain is on the periplasmic side; that stretch reads LTGTFVDNWYLWCVKHGAAPDYPAYLPATPDPASLPGAPK.

It belongs to the reaction center PufL/M/PsbA/D family. As to quaternary structure, reaction center is composed of four bacteriochlorophylls, two bacteriopheophytins, two ubiquinones, one iron, and three highly hydrophobic polypeptide chains (designated L, M, and H).

It localises to the cellular chromatophore membrane. Functionally, the reaction center is a membrane-bound complex that mediates the initial photochemical event in the electron transfer process of photosynthesis. In Blastochloris viridis (Rhodopseudomonas viridis), this protein is Reaction center protein M chain (pufM).